The chain runs to 123 residues: DPEP2 neighbor protein (123 aa).

The segment at 67 to 123 (APLATPTKAEAEKPAPRRAPKRRQATIESDKDLGCSSPKIRRLEHRGRRLTPQKLAG) is disordered. The span at 105 to 117 (KIRRLEHRGRRLT) shows a compositional bias: basic residues.

The polypeptide is DPEP2 neighbor protein (Homo sapiens (Human)).